The primary structure comprises 829 residues: Leucine--tRNA ligase (829 aa).

The 'HIGH' region motif lies at 42–52 (PYPSGRIHMGH). The 'KMSKS' region motif lies at 584 to 588 (KMSKS). Residue Lys587 coordinates ATP.

Belongs to the class-I aminoacyl-tRNA synthetase family.

It localises to the cytoplasm. It carries out the reaction tRNA(Leu) + L-leucine + ATP = L-leucyl-tRNA(Leu) + AMP + diphosphate. The polypeptide is Leucine--tRNA ligase (Syntrophobacter fumaroxidans (strain DSM 10017 / MPOB)).